We begin with the raw amino-acid sequence, 337 residues long: Tetraacyldisaccharide 4'-kinase (337 aa).

55–62 (NAGGTGKT) is an ATP binding site.

Belongs to the LpxK family.

The catalysed reaction is a lipid A disaccharide + ATP = a lipid IVA + ADP + H(+). It participates in glycolipid biosynthesis; lipid IV(A) biosynthesis; lipid IV(A) from (3R)-3-hydroxytetradecanoyl-[acyl-carrier-protein] and UDP-N-acetyl-alpha-D-glucosamine: step 6/6. In terms of biological role, transfers the gamma-phosphate of ATP to the 4'-position of a tetraacyldisaccharide 1-phosphate intermediate (termed DS-1-P) to form tetraacyldisaccharide 1,4'-bis-phosphate (lipid IVA). The sequence is that of Tetraacyldisaccharide 4'-kinase from Dinoroseobacter shibae (strain DSM 16493 / NCIMB 14021 / DFL 12).